The chain runs to 450 residues: MFS-type transporter avaK (450 aa).

Helical transmembrane passes span 18–38 (VMAL…LSMP), 100–120 (RVVC…SGLL), 148–168 (AVAL…AAPA), 171–191 (ALVA…MLFV), 244–264 (APII…HFLL), 280–300 (LVLV…MPAA), 329–349 (FGFF…ALAF), and 408–428 (GWLG…LVAV).

This sequence belongs to the major facilitator superfamily.

The protein localises to the membrane. It participates in secondary metabolite biosynthesis. MFS-type transporter; part of the cluster that mediates the biosynthesis of a highly modified cyclo-arginine-tryptophan dipeptide (cRW). This Aspergillus versicolor protein is MFS-type transporter avaK.